The sequence spans 142 residues: MKSYMAKTNEVERKWFIVDAEGKTLGRLSSEIAKILTGKNKPEYTPHVDTGDFVIVVNAEKVVLTGKKLDQESYTYHTGHPGGLKQISFRRMLAEKPELLTYHAVKGMIPKTRLGRQMLKKLKVYAGENHDHEAQQPQALEL.

The protein belongs to the universal ribosomal protein uL13 family. Part of the 50S ribosomal subunit.

Functionally, this protein is one of the early assembly proteins of the 50S ribosomal subunit, although it is not seen to bind rRNA by itself. It is important during the early stages of 50S assembly. In Alkaliphilus metalliredigens (strain QYMF), this protein is Large ribosomal subunit protein uL13.